The sequence spans 146 residues: Hemoglobin subunit beta (146 aa).

The Globin domain occupies 2–146; the sequence is QWTAEEKQLI…VAHALARKYH (145 aa). H63 and H92 together coordinate heme b.

Belongs to the globin family. As to quaternary structure, heterotetramer of two alpha chains and two beta chains. In terms of tissue distribution, red blood cells.

Functionally, involved in oxygen transport from the lung to the various peripheral tissues. The sequence is that of Hemoglobin subunit beta (HBB) from Apus apus (Common swift).